A 313-amino-acid polypeptide reads, in one-letter code: Protein FixB (313 aa).

Residue 255-283 (LYLAVGISGQIQHMVGANASQTIFAINKD) participates in FAD binding.

This sequence belongs to the ETF alpha-subunit/FixB family. In terms of assembly, heterodimer of FixA and FixB.

Its pathway is amine and polyamine metabolism; carnitine metabolism. Required for anaerobic carnitine reduction. May bring reductant to CaiA. This Escherichia coli O7:K1 (strain IAI39 / ExPEC) protein is Protein FixB.